A 793-amino-acid chain; its full sequence is E3 UFM1-protein ligase 1 (793 aa).

A2 carries the N-acetylalanine modification. Residues 2-200 form a mediates interaction with DDRGK1 region; that stretch reads ADAWEEIRRL…RGLFSAITRP (199 aa). Residues 2-212 form a required for E3 UFM1-protein ligase activity region; the sequence is ADAWEEIRRL…VNSLVSKYGF (211 aa). The involved in CDK5RAP3-binding stretch occupies residues 121–250; that stretch reads DQLSEEVNDK…KAVFVPDIYS (130 aa). The mediates interaction with TRIP4 stretch occupies residues 200–400; it reads PTPVNSLVSK…NPVHLITEED (201 aa). Residues 410–473 form a disordered region; sequence VNTSKKDKKD…SSHGGKKKPD (64 aa). R433 carries the omega-N-methylarginine modification. Residues S458 and S462 each carry the phosphoserine modification. The segment at 490 to 683 is mediates interaction with CDK5RAP3; sequence IQDAPEEFIS…QLKVTEDPAL (194 aa). T535 bears the Phosphothreonine mark. A disordered region spans residues 742 to 765; it reads NKKTGQGEDPSSDELDKEQHDVTN. S752 and S753 each carry phosphoserine.

Belongs to the UFL1 family. Catalytic component of the UFM1 ribosome E3 ligase (UREL) complex, composed of UFL1, DDRGK1 and CDK5RAP3. Interacts with E2-like enzyme UFC1. Interacts with RELA. Interacts with NBN; promoting recruitment to double-strand breaks following DNA damage. Interacts (when phosphorylated) with YWHAG/14-3-3-gamma; sequestering UFL1 and preventing its association with PDCD1/PD-1 substrate. Ubiquitinated, leading to its degradation by the proteasome. Interaction with CDK5RAP3 protects both proteins against ubiquitination and degradation via the proteasome. Post-translationally, phosphorylated at Ser-462 by ATM, enhancing protein ligase activity and promoting ATM activation in a positive feedback loop. Phosphorylation at Thr-535 by AMPK promotes its interaction with YWHAG/14-3-3-gamma, thereby preventing UFL1 association with PDCD1/PD-1 substrate. As to expression, ubiquitously expressed with higher expression in pancreatic islets and other secretory tissues. In the embryonic brain at 17 dpc, detected in Sox2-positive neural stem cells and in Slc1a3/GLAST-positive radial glia. In perinatal brain, highly expressed in Slc1a3-positive Bergmann glia of the cerebellum. Continues to be expressed in Bergmann glia of adult brain at 16 weeks. Expressed in adult heart. Highly expressed in the intestinal exocrine cells.

It localises to the endoplasmic reticulum membrane. Its subcellular location is the cytoplasm. The protein localises to the cytosol. It is found in the nucleus. The protein resides in the chromosome. Functionally, E3 protein ligase that mediates ufmylation, the covalent attachment of the ubiquitin-like modifier UFM1 to lysine residues on target proteins, and which plays a key role in various processes, such as ribosome recycling, response to DNA damage, interferon response or reticulophagy (also called ER-phagy). Catalyzes ufmylation of many protein, such as CD274/PD-L1, CDK5RAP3, CYB5R3, DDRGK1, EIF6, histone H4, MRE11, P4HB, PDCD1/PD-1, TRIP4, RPN1, RPS20/uS10, RPL10/uL16, RPL26/uL24, SYVN1/HRD1 and TP53/p53. As part of the UREL complex, plays a key role in ribosome recycling by catalyzing mono-ufmylation of RPL26/uL24 subunit of the 60S ribosome. Ufmylation of RPL26/uL24 occurs on free 60S ribosomes following ribosome dissociation: it weakens the junction between post-termination 60S subunits and SEC61 translocons, promoting release and recycling of the large ribosomal subunit from the endoplasmic reticulum membrane. Ufmylation of RPL26/uL24 and subsequent 60S ribosome recycling either take place after normal termination of translation or after ribosome stalling during cotranslational translocation at the endoplasmic reticulum. Involved in reticulophagy in response to endoplasmic reticulum stress by mediating ufmylation of proteins such as CYB5R3 and RPN1, thereby promoting lysosomal degradation of ufmylated proteins. Ufmylation in response to endoplasmic reticulum stress is essential for processes such as hematopoiesis, blood vessel morphogenesis or inflammatory response. Mediates ufmylation of DDRGK1 and CDK5RAP3; the role of these modifications is however unclear: as both DDRGK1 and CDK5RAP3 act as substrate adapters for ufmylation, it is uncertain whether ufmylation of these proteins is a collateral effect or is required for ufmylation. Acts as a negative regulator of T-cell activation by mediating ufmylation and stabilization of PDCD1/PD-1. Also involved in the response to DNA damage: recruited to double-strand break sites following DNA damage and mediates monoufmylation of histone H4 and ufmylation of MRE11. Mediates ufmylation of TP53/p53, promoting its stability. Catalyzes ufmylation of TRIP4, thereby playing a role in nuclear receptor-mediated transcription. Required for hematopoietic stem cell function and hematopoiesis. The polypeptide is E3 UFM1-protein ligase 1 (Mus musculus (Mouse)).